The following is a 285-amino-acid chain: ATP phosphoribosyltransferase (285 aa).

This sequence belongs to the ATP phosphoribosyltransferase family. Long subfamily. Mg(2+) is required as a cofactor.

It localises to the cytoplasm. It catalyses the reaction 1-(5-phospho-beta-D-ribosyl)-ATP + diphosphate = 5-phospho-alpha-D-ribose 1-diphosphate + ATP. Its pathway is amino-acid biosynthesis; L-histidine biosynthesis; L-histidine from 5-phospho-alpha-D-ribose 1-diphosphate: step 1/9. Its activity is regulated as follows. Feedback inhibited by histidine. Catalyzes the condensation of ATP and 5-phosphoribose 1-diphosphate to form N'-(5'-phosphoribosyl)-ATP (PR-ATP). Has a crucial role in the pathway because the rate of histidine biosynthesis seems to be controlled primarily by regulation of HisG enzymatic activity. The protein is ATP phosphoribosyltransferase of Methanocella arvoryzae (strain DSM 22066 / NBRC 105507 / MRE50).